Reading from the N-terminus, the 261-residue chain is tRNA pseudouridine synthase A (261 aa).

Asp-51 functions as the Nucleophile in the catalytic mechanism. Tyr-109 contacts substrate.

Belongs to the tRNA pseudouridine synthase TruA family. Homodimer.

The enzyme catalyses uridine(38/39/40) in tRNA = pseudouridine(38/39/40) in tRNA. In terms of biological role, formation of pseudouridine at positions 38, 39 and 40 in the anticodon stem and loop of transfer RNAs. This chain is tRNA pseudouridine synthase A, found in Methylobacillus flagellatus (strain ATCC 51484 / DSM 6875 / VKM B-1610 / KT).